An 84-amino-acid chain; its full sequence is Small ribosomal subunit protein bS20 (84 aa).

Positions 1 to 28 are disordered; sequence MPNIKSAIKRVKTADTRNSRNASQRSAM.

This sequence belongs to the bacterial ribosomal protein bS20 family.

Binds directly to 16S ribosomal RNA. The polypeptide is Small ribosomal subunit protein bS20 (Listeria welshimeri serovar 6b (strain ATCC 35897 / DSM 20650 / CCUG 15529 / CIP 8149 / NCTC 11857 / SLCC 5334 / V8)).